We begin with the raw amino-acid sequence, 412 residues long: Proline-rich protein 30 (412 aa).

Over residues 33–45 (HNLQPLSAHQSLR) the composition is skewed to polar residues. Disordered stretches follow at residues 33–75 (HNLQ…QFGS), 123–174 (PLTP…SNRQ), and 318–412 (PKEV…KSSV). Composition is skewed to low complexity over residues 126 to 142 (PSFSPSQPQNSSLPHSP) and 334 to 350 (PSPAFQPPAAQARADPA). Polar residues predominate over residues 353–372 (TPSQTRSFRSAGLQSPNSPR).

The chain is Proline-rich protein 30 (PRR30) from Macaca fascicularis (Crab-eating macaque).